Reading from the N-terminus, the 254-residue chain is Homeobox protein Dlx4b (254 aa).

The segment at residues 129–188 (IRKPRTIYSSVQLQALHQRFQQTQYLALPERADLAAKLGLTQTQVKIWFQNKRSKYKKIM) is a DNA-binding region (homeobox).

This sequence belongs to the distal-less homeobox family.

Its subcellular location is the nucleus. During larvae development, may be important for neurocranium morphogenesis. In Danio rerio (Zebrafish), this protein is Homeobox protein Dlx4b (dlx4b).